A 104-amino-acid polypeptide reads, in one-letter code: DNA-directed RNA polymerase subunit omega (104 aa).

The protein belongs to the RNA polymerase subunit omega family. In terms of assembly, the RNAP catalytic core consists of 2 alpha, 1 beta, 1 beta' and 1 omega subunit. When a sigma factor is associated with the core the holoenzyme is formed, which can initiate transcription.

The catalysed reaction is RNA(n) + a ribonucleoside 5'-triphosphate = RNA(n+1) + diphosphate. Promotes RNA polymerase assembly. Latches the N- and C-terminal regions of the beta' subunit thereby facilitating its interaction with the beta and alpha subunits. The sequence is that of DNA-directed RNA polymerase subunit omega from Streptococcus suis (strain 05ZYH33).